Here is a 201-residue protein sequence, read N- to C-terminus: Extracellular superoxide dismutase [Cu-Zn] (201 aa).

Residues 1-42 (MINSFIVIFLSFLIFINYANLVCVEATHVYGRRSHSNGMHGN) form the signal peptide. Cu cation-binding residues include His-89, His-91, and His-106. A disulfide bridge links Cys-100 with Cys-192. His-106, His-114, His-123, and Asp-126 together coordinate Zn(2+). Residue His-163 participates in Cu cation binding.

The protein belongs to the Cu-Zn superoxide dismutase family. As to quaternary structure, homodimer. The cofactor is Cu cation. Requires Zn(2+) as cofactor.

The protein localises to the secreted. It localises to the extracellular space. It carries out the reaction 2 superoxide + 2 H(+) = H2O2 + O2. Functionally, destroys radicals which are normally produced within the cells and which are toxic to biological systems. May act in the parasite defense against phagocyte-generated reactive oxygen species. This chain is Extracellular superoxide dismutase [Cu-Zn] (sod-4), found in Onchocerca volvulus.